A 570-amino-acid chain; its full sequence is Aspartyl aminopeptidase (570 aa).

H86 lines the Zn(2+) pocket. Substrate is bound at residue H160. D324 lines the Zn(2+) pocket. Position 379 (E379) interacts with substrate. Zn(2+) is bound by residues E380 and D434. Positions 434, 437, 462, and 469 each coordinate substrate. H534 serves as a coordination point for Zn(2+).

Belongs to the peptidase M18 family. Homododecamer composed of homodimers and homotrimers that assemble into a tetrahedron shape to create a central tunnel containing the active sites. Homooctamer. Zn(2+) is required as a cofactor.

The protein localises to the cytoplasm. The catalysed reaction is Release of an N-terminal aspartate or glutamate from a peptide, with a preference for aspartate.. Activated by Co(2+). Inhibited by high concentrations (&gt;1mM) of Zn(2+). Its function is as follows. Aminopeptidase which specifically catalyzes the removal of glutamic acid or aspartic acid residues from the N-terminus of peptides. May play a role in the final step of host hemoglobin catabolism, by cleaving hemoglobin-derived oligopeptides in the cytoplasm. This is Aspartyl aminopeptidase from Plasmodium falciparum (isolate 3D7).